The primary structure comprises 52 residues: UPF0057 membrane protein PA0567 (52 aa).

The next 2 membrane-spanning stretches (helical) occupy residues 6–26 and 29–49; these read ILIA…FGGA and LNIL…VYII.

The protein belongs to the UPF0057 (PMP3) family.

The protein localises to the cell membrane. The polypeptide is UPF0057 membrane protein PA0567 (Pseudomonas aeruginosa (strain ATCC 15692 / DSM 22644 / CIP 104116 / JCM 14847 / LMG 12228 / 1C / PRS 101 / PAO1)).